Here is an 806-residue protein sequence, read N- to C-terminus: Leucine--tRNA ligase (806 aa).

The 'HIGH' region signature appears at 40-51; sequence PYPSGKGLHVGH. The short motif at 580–584 is the 'KMSKS' region element; it reads KMSKS. ATP is bound at residue lysine 583.

This sequence belongs to the class-I aminoacyl-tRNA synthetase family.

It localises to the cytoplasm. The enzyme catalyses tRNA(Leu) + L-leucine + ATP = L-leucyl-tRNA(Leu) + AMP + diphosphate. This Ureaplasma parvum serovar 3 (strain ATCC 27815 / 27 / NCTC 11736) protein is Leucine--tRNA ligase.